The primary structure comprises 955 residues: 26S proteasome non-ATPase regulatory subunit 1 (955 aa).

The tract at residues 279–313 (PGSTNTGTVPGSEKDSDAMEAEEKPGSTCVGKSAE) is disordered. The span at 290-303 (SEKDSDAMEAEEKP) shows a compositional bias: basic and acidic residues. PC repeat units lie at residues 403–436 (TATA…PGSA), 441–474 (GGLY…DIVR), 476–510 (GGSL…VTGE), 511–545 (AAGL…EKIL), 547–580 (GLAV…ILRR), 581–616 (SGMY…DVRR), 617–649 (AAVE…PHVR), 651–685 (GAAM…YVRQ), 686–726 (GALI…DVMA), and 729–761 (GAIL…PSVV). Disordered stretches follow at residues 839–879 (AKKK…NFQL) and 932–955 (AHGP…YIDD). 2 stretches are compositionally biased toward basic and acidic residues: residues 842 to 854 (KEKE…KEEE) and 861 to 874 (TEKK…KEPE). The segment covering 938-955 (EEEEQEPEPPEPFEYIDD) has biased composition (acidic residues).

Belongs to the proteasome subunit S1 family. In terms of assembly, component of the 19S proteasome regulatory particle complex. The 26S proteasome consists of a 20S core particle (CP) and two 19S regulatory subunits (RP). The regulatory particle is made of a lid composed of 9 subunits, a base containing 6 ATPases and few additional components including PSMD1. Interacts with ADRM1.

In terms of biological role, component of the 26S proteasome, a multiprotein complex involved in the ATP-dependent degradation of ubiquitinated proteins. This complex plays a key role in the maintenance of protein homeostasis by removing misfolded or damaged proteins, which could impair cellular functions, and by removing proteins whose functions are no longer required. Therefore, the proteasome participates in numerous cellular processes, including cell cycle progression, apoptosis, or DNA damage repair. The polypeptide is 26S proteasome non-ATPase regulatory subunit 1 (PSMD1) (Gallus gallus (Chicken)).